Consider the following 212-residue polypeptide: MKNVDDLIDDAAALADRGLSRGEIADELNVSRETASWLVERADTNASVAATDTDDSPRDVHVDWSTIGEAGARLSAIGIALADALRDHSHDVDLVVGIEKAGVPLATATANELGTDLATYTPRKHQWDEGDMADLGGSFSRNFASVEDRDCFVVDDTVTSGTTITETIQAVREAGGTPVACGVLADKQGLGDVDGTPIEALLQVIRVGSGDD.

It belongs to the purine/pyrimidine phosphoribosyltransferase family. GfcR subfamily.

Its function is as follows. DNA-binding transcriptional regulator that functions as a regulator of central sugar catabolic pathways. This Halobacterium salinarum (strain ATCC 29341 / DSM 671 / R1) protein is Transcriptional regulator GfcR.